A 130-amino-acid polypeptide reads, in one-letter code: Chaperone protein SycT (130 aa).

As to quaternary structure, binds to YopT.

In terms of biological role, functions as a specific chaperone for YopT. The protein is Chaperone protein SycT (sycT) of Yersinia enterocolitica.